Here is a 988-residue protein sequence, read N- to C-terminus: Exportin-T (988 aa).

It belongs to the exportin family.

It localises to the nucleus. It is found in the cytoplasm. In terms of biological role, tRNA nucleus export receptor which facilitates tRNA translocation across the nuclear pore complex. Involved in pre-tRNA splicing, probably by affecting the interaction of pre-tRNA with splicing endonuclease. In Lodderomyces elongisporus (strain ATCC 11503 / CBS 2605 / JCM 1781 / NBRC 1676 / NRRL YB-4239) (Yeast), this protein is Exportin-T (LOS1).